The chain runs to 262 residues: tRNA pseudouridine synthase A (262 aa).

Residue D52 is the Nucleophile of the active site. Y103 serves as a coordination point for substrate.

Belongs to the tRNA pseudouridine synthase TruA family.

The enzyme catalyses uridine(38/39/40) in tRNA = pseudouridine(38/39/40) in tRNA. In terms of biological role, formation of pseudouridine at positions 38, 39 and 40 in the anticodon stem and loop of transfer RNAs. This Methanococcus maripaludis (strain DSM 14266 / JCM 13030 / NBRC 101832 / S2 / LL) protein is tRNA pseudouridine synthase A.